A 509-amino-acid chain; its full sequence is ATP synthase subunit alpha (509 aa).

ATP is bound at residue 169 to 176 (GDRQTGKT).

This sequence belongs to the ATPase alpha/beta chains family. As to quaternary structure, F-type ATPases have 2 components, CF(1) - the catalytic core - and CF(0) - the membrane proton channel. CF(1) has five subunits: alpha(3), beta(3), gamma(1), delta(1), epsilon(1). CF(0) has three main subunits: a(1), b(2) and c(9-12). The alpha and beta chains form an alternating ring which encloses part of the gamma chain. CF(1) is attached to CF(0) by a central stalk formed by the gamma and epsilon chains, while a peripheral stalk is formed by the delta and b chains.

It localises to the cell inner membrane. The catalysed reaction is ATP + H2O + 4 H(+)(in) = ADP + phosphate + 5 H(+)(out). In terms of biological role, produces ATP from ADP in the presence of a proton gradient across the membrane. The alpha chain is a regulatory subunit. In Methylorubrum populi (strain ATCC BAA-705 / NCIMB 13946 / BJ001) (Methylobacterium populi), this protein is ATP synthase subunit alpha.